The chain runs to 437 residues: GTPase Obg (437 aa).

The Obg domain maps to 2-161 (SDFIDRALIT…RELQLELKVI (160 aa)). Positions 162-335 (ADVGLVGFPN…LQRRIVDILR (174 aa)) constitute an OBG-type G domain. GTP is bound by residues 168–175 (GFPNAGKS), 193–197 (FTTLS), 214–217 (DIPG), 284–287 (NKTD), and 316–318 (SAA). The Mg(2+) site is built by Ser175 and Thr195. Positions 355–433 (FSNIDPNDFW…IEKAELLWQD (79 aa)) constitute an OCT domain.

It belongs to the TRAFAC class OBG-HflX-like GTPase superfamily. OBG GTPase family. Monomer. Mg(2+) serves as cofactor.

The protein localises to the cytoplasm. Its function is as follows. An essential GTPase which binds GTP, GDP and possibly (p)ppGpp with moderate affinity, with high nucleotide exchange rates and a fairly low GTP hydrolysis rate. Plays a role in control of the cell cycle, stress response, ribosome biogenesis and in those bacteria that undergo differentiation, in morphogenesis control. The protein is GTPase Obg of Herpetosiphon aurantiacus (strain ATCC 23779 / DSM 785 / 114-95).